The primary structure comprises 362 residues: Lipoprotein p35 (362 aa).

The signal sequence occupies residues 1–30 (MKIKKIKLLKALALTGAFGIVATVPVIVSS). A lipid anchor (N-palmitoyl cysteine) is attached at cysteine 31. Cysteine 31 carries the S-diacylglycerol cysteine lipid modification. The disordered stretch occupies residues 33–53 (STSENNGNGNGNGGTDGNTQQ).

Belongs to the p35 lipoprotein family. The N-terminus is blocked.

The protein localises to the cell membrane. Functionally, major M.penetrans antigen. In Malacoplasma penetrans (Mycoplasma penetrans), this protein is Lipoprotein p35.